Here is a 912-residue protein sequence, read N- to C-terminus: Protein transport protein SEC24-2 (912 aa).

The segment covering 1-11 (MSNPSRPKKRV) has biased composition (basic residues). Disordered regions lie at residues 1 to 83 (MSNP…QQIS) and 102 to 129 (PNAY…PGRP). Composition is skewed to polar residues over residues 33 to 45 (SGQT…SGSA), 53 to 74 (GQFT…MTPA), and 106 to 129 (YQPN…PGRP). Zn(2+) is bound by residues cysteine 226, cysteine 229, cysteine 248, and cysteine 251. The interval 226-251 (CRRCRGYLNPFVKILQVESKWRCNFC) is zinc finger-like.

The protein belongs to the SEC23/SEC24 family. SEC24 subfamily. In terms of assembly, the COPII coat is composed of at least 5 proteins: the SEC23/24 complex, the SEC13/31 complex, and the protein SAR1. Golgi apparatus membrane; Peripheral membrane protein; Cytoplasmic side.

The protein resides in the cytoplasm. It localises to the cytoplasmic vesicle. Its subcellular location is the COPII-coated vesicle membrane. It is found in the endoplasmic reticulum membrane. The protein localises to the golgi apparatus membrane. Functionally, component of the coat protein complex II (COPII) which promotes the formation of transport vesicles from the endoplasmic reticulum (ER). The coat has two main functions, the physical deformation of the endoplasmic reticulum membrane into vesicles and the selection of cargo molecules. This Naumovozyma castellii (Yeast) protein is Protein transport protein SEC24-2 (SEC242).